The sequence spans 296 residues: Bifunctional protein FolD 1 (296 aa).

NADP(+)-binding positions include 167–169 (GCG) and isoleucine 235.

Belongs to the tetrahydrofolate dehydrogenase/cyclohydrolase family. Homodimer.

The enzyme catalyses (6R)-5,10-methylene-5,6,7,8-tetrahydrofolate + NADP(+) = (6R)-5,10-methenyltetrahydrofolate + NADPH. It carries out the reaction (6R)-5,10-methenyltetrahydrofolate + H2O = (6R)-10-formyltetrahydrofolate + H(+). Its pathway is one-carbon metabolism; tetrahydrofolate interconversion. In terms of biological role, catalyzes the oxidation of 5,10-methylenetetrahydrofolate to 5,10-methenyltetrahydrofolate and then the hydrolysis of 5,10-methenyltetrahydrofolate to 10-formyltetrahydrofolate. This is Bifunctional protein FolD 1 from Nocardioides sp. (strain ATCC BAA-499 / JS614).